A 188-amino-acid chain; its full sequence is Acyl-acyl carrier protein thioesterase ATL2, chloroplastic (188 aa).

The N-terminal 47 residues, 1 to 47 (MFQATSTGAQIMHAAFPRSWRRGHVLPLRSAKIFKPLACLELRGSTG), are a transit peptide targeting the chloroplast. Aspartate 64 is an active-site residue.

Belongs to the 4-hydroxybenzoyl-CoA thioesterase family. As to expression, expressed in endodermal and peridermal cells in young and mature roots, in boundaries of stem lateral organs and developing seeds.

Its subcellular location is the plastid. The protein resides in the chloroplast. Functionally, acyl-ACP thioesterase involved in the production of fatty acids and beta-keto fatty acids. Can produce beta-keto fatty acids of medium chain (8:0 and 10:0) and small amounts of 8:0 fatty acid when expressed in a heterologous organism (E.coli). May play a role in suberin biosynthesis. This is Acyl-acyl carrier protein thioesterase ATL2, chloroplastic from Arabidopsis thaliana (Mouse-ear cress).